Reading from the N-terminus, the 336-residue chain is D-erythrose-4-phosphate dehydrogenase (336 aa).

11–12 (RI) lines the NAD(+) pocket. Substrate contacts are provided by residues 153-155 (SCT), Arg199, 212-213 (TK), and Arg235. The active-site Nucleophile is Cys154. NAD(+) is bound at residue Asn317.

Belongs to the glyceraldehyde-3-phosphate dehydrogenase family. Epd subfamily. In terms of assembly, homotetramer.

Its subcellular location is the cytoplasm. The catalysed reaction is D-erythrose 4-phosphate + NAD(+) + H2O = 4-phospho-D-erythronate + NADH + 2 H(+). It functions in the pathway cofactor biosynthesis; pyridoxine 5'-phosphate biosynthesis; pyridoxine 5'-phosphate from D-erythrose 4-phosphate: step 1/5. Functionally, catalyzes the NAD-dependent conversion of D-erythrose 4-phosphate to 4-phosphoerythronate. This chain is D-erythrose-4-phosphate dehydrogenase, found in Aeromonas salmonicida (strain A449).